The sequence spans 248 residues: Proteasome subunit alpha (248 aa).

Positions 229-248 are disordered; it reads LLEADGATTEAESSAEEEDE.

It belongs to the peptidase T1A family. As to quaternary structure, the 20S proteasome core is composed of 14 alpha and 14 beta subunits that assemble into four stacked heptameric rings, resulting in a barrel-shaped structure. The two inner rings, each composed of seven catalytic beta subunits, are sandwiched by two outer rings, each composed of seven alpha subunits. The catalytic chamber with the active sites is on the inside of the barrel. Has a gated structure, the ends of the cylinder being occluded by the N-termini of the alpha-subunits. Is capped by the proteasome-associated ATPase, ARC.

The protein resides in the cytoplasm. It functions in the pathway protein degradation; proteasomal Pup-dependent pathway. With respect to regulation, the formation of the proteasomal ATPase ARC-20S proteasome complex, likely via the docking of the C-termini of ARC into the intersubunit pockets in the alpha-rings, may trigger opening of the gate for substrate entry. Interconversion between the open-gate and close-gate conformations leads to a dynamic regulation of the 20S proteasome proteolysis activity. Its function is as follows. Component of the proteasome core, a large protease complex with broad specificity involved in protein degradation. This is Proteasome subunit alpha from Streptomyces scabiei (strain 87.22).